The primary structure comprises 186 residues: ATP synthase subunit delta (186 aa).

Belongs to the ATPase delta chain family. F-type ATPases have 2 components, F(1) - the catalytic core - and F(0) - the membrane proton channel. F(1) has five subunits: alpha(3), beta(3), gamma(1), delta(1), epsilon(1). CF(0) has four main subunits: a(1), b(1), b'(1) and c(10-14). The alpha and beta chains form an alternating ring which encloses part of the gamma chain. F(1) is attached to F(0) by a central stalk formed by the gamma and epsilon chains, while a peripheral stalk is formed by the delta, b and b' chains.

It is found in the cell inner membrane. In terms of biological role, f(1)F(0) ATP synthase produces ATP from ADP in the presence of a proton or sodium gradient. F-type ATPases consist of two structural domains, F(1) containing the extramembraneous catalytic core and F(0) containing the membrane proton channel, linked together by a central stalk and a peripheral stalk. During catalysis, ATP synthesis in the catalytic domain of F(1) is coupled via a rotary mechanism of the central stalk subunits to proton translocation. Functionally, this protein is part of the stalk that links CF(0) to CF(1). It either transmits conformational changes from CF(0) to CF(1) or is implicated in proton conduction. The chain is ATP synthase subunit delta from Rhodospirillum rubrum (strain ATCC 11170 / ATH 1.1.1 / DSM 467 / LMG 4362 / NCIMB 8255 / S1).